Consider the following 154-residue polypeptide: 17.8 kDa class I heat shock protein (154 aa).

In terms of domain architecture, sHSP spans 40–154 (ESSAFANTRI…PEVKSIEISG (115 aa)).

This sequence belongs to the small heat shock protein (HSP20) family. In terms of assembly, forms oligomeric structures.

The protein resides in the cytoplasm. The protein is 17.8 kDa class I heat shock protein of Solanum lycopersicum (Tomato).